The chain runs to 271 residues: Pyrroline-5-carboxylate reductase (271 aa).

It belongs to the pyrroline-5-carboxylate reductase family.

It localises to the cytoplasm. It catalyses the reaction L-proline + NADP(+) = (S)-1-pyrroline-5-carboxylate + NADPH + 2 H(+). It carries out the reaction L-proline + NAD(+) = (S)-1-pyrroline-5-carboxylate + NADH + 2 H(+). It functions in the pathway amino-acid biosynthesis; L-proline biosynthesis; L-proline from L-glutamate 5-semialdehyde: step 1/1. In terms of biological role, catalyzes the reduction of 1-pyrroline-5-carboxylate (PCA) to L-proline. The protein is Pyrroline-5-carboxylate reductase of Staphylococcus aureus (strain Mu50 / ATCC 700699).